The sequence spans 389 residues: Carbamoyl phosphate synthase small chain (389 aa).

Positions 1-197 (MMSSPAKAAK…AAKDASIGDD (197 aa)) are CPSase. S51, G249, and G251 together coordinate L-glutamine. One can recognise a Glutamine amidotransferase type-1 domain in the interval 201 to 387 (HVVCMDFGMK…QEQLNEKCGV (187 aa)). Catalysis depends on C276, which acts as the Nucleophile. Positions 277, 280, 318, 320, and 321 each coordinate L-glutamine. Active-site residues include H360 and E362.

Belongs to the CarA family. In terms of assembly, composed of two chains; the small (or glutamine) chain promotes the hydrolysis of glutamine to ammonia, which is used by the large (or ammonia) chain to synthesize carbamoyl phosphate. Tetramer of heterodimers (alpha,beta)4.

It carries out the reaction hydrogencarbonate + L-glutamine + 2 ATP + H2O = carbamoyl phosphate + L-glutamate + 2 ADP + phosphate + 2 H(+). The catalysed reaction is L-glutamine + H2O = L-glutamate + NH4(+). Its pathway is amino-acid biosynthesis; L-arginine biosynthesis; carbamoyl phosphate from bicarbonate: step 1/1. It functions in the pathway pyrimidine metabolism; UMP biosynthesis via de novo pathway; (S)-dihydroorotate from bicarbonate: step 1/3. In terms of biological role, small subunit of the glutamine-dependent carbamoyl phosphate synthetase (CPSase). CPSase catalyzes the formation of carbamoyl phosphate from the ammonia moiety of glutamine, carbonate, and phosphate donated by ATP, constituting the first step of 2 biosynthetic pathways, one leading to arginine and/or urea and the other to pyrimidine nucleotides. The small subunit (glutamine amidotransferase) binds and cleaves glutamine to supply the large subunit with the substrate ammonia. The polypeptide is Carbamoyl phosphate synthase small chain (Rhodopirellula baltica (strain DSM 10527 / NCIMB 13988 / SH1)).